We begin with the raw amino-acid sequence, 331 residues long: 6-phosphogluconolactonase (331 aa).

This sequence belongs to the cycloisomerase 2 family.

It carries out the reaction 6-phospho-D-glucono-1,5-lactone + H2O = 6-phospho-D-gluconate + H(+). Its pathway is carbohydrate degradation; pentose phosphate pathway; D-ribulose 5-phosphate from D-glucose 6-phosphate (oxidative stage): step 2/3. Functionally, catalyzes the hydrolysis of 6-phosphogluconolactone to 6-phosphogluconate. The sequence is that of 6-phosphogluconolactonase from Salmonella choleraesuis (strain SC-B67).